We begin with the raw amino-acid sequence, 169 residues long: Crossover junction endodeoxyribonuclease RuvC (169 aa).

Catalysis depends on residues Asp7, Glu67, and Asp140. Asp7, Glu67, and Asp140 together coordinate Mg(2+).

It belongs to the RuvC family. As to quaternary structure, homodimer which binds Holliday junction (HJ) DNA. The HJ becomes 2-fold symmetrical on binding to RuvC with unstacked arms; it has a different conformation from HJ DNA in complex with RuvA. In the full resolvosome a probable DNA-RuvA(4)-RuvB(12)-RuvC(2) complex forms which resolves the HJ. Requires Mg(2+) as cofactor.

It localises to the cytoplasm. It carries out the reaction Endonucleolytic cleavage at a junction such as a reciprocal single-stranded crossover between two homologous DNA duplexes (Holliday junction).. In terms of biological role, the RuvA-RuvB-RuvC complex processes Holliday junction (HJ) DNA during genetic recombination and DNA repair. Endonuclease that resolves HJ intermediates. Cleaves cruciform DNA by making single-stranded nicks across the HJ at symmetrical positions within the homologous arms, yielding a 5'-phosphate and a 3'-hydroxyl group; requires a central core of homology in the junction. The consensus cleavage sequence is 5'-(A/T)TT(C/G)-3'. Cleavage occurs on the 3'-side of the TT dinucleotide at the point of strand exchange. HJ branch migration catalyzed by RuvA-RuvB allows RuvC to scan DNA until it finds its consensus sequence, where it cleaves and resolves the cruciform DNA. The polypeptide is Crossover junction endodeoxyribonuclease RuvC (Clostridioides difficile (strain 630) (Peptoclostridium difficile)).